We begin with the raw amino-acid sequence, 184 residues long: NADH-quinone oxidoreductase subunit B (184 aa).

[4Fe-4S] cluster-binding residues include C37, C38, C103, and C132.

It belongs to the complex I 20 kDa subunit family. In terms of assembly, NDH-1 is composed of 14 different subunits. Subunits NuoB, C, D, E, F, and G constitute the peripheral sector of the complex. It depends on [4Fe-4S] cluster as a cofactor.

The protein resides in the cell membrane. The catalysed reaction is a quinone + NADH + 5 H(+)(in) = a quinol + NAD(+) + 4 H(+)(out). NDH-1 shuttles electrons from NADH, via FMN and iron-sulfur (Fe-S) centers, to quinones in the respiratory chain. The immediate electron acceptor for the enzyme in this species is believed to be a menaquinone. Couples the redox reaction to proton translocation (for every two electrons transferred, four hydrogen ions are translocated across the cytoplasmic membrane), and thus conserves the redox energy in a proton gradient. The sequence is that of NADH-quinone oxidoreductase subunit B from Beutenbergia cavernae (strain ATCC BAA-8 / DSM 12333 / CCUG 43141 / JCM 11478 / NBRC 16432 / NCIMB 13614 / HKI 0122).